A 104-amino-acid chain; its full sequence is PTS system lactose-specific EIIA component (104 aa).

One can recognise a PTS EIIA type-3 domain in the interval 4-102 (EEATLLGFEI…MKHLIELYKR (99 aa)). Residue H78 is the Tele-phosphohistidine intermediate of the active site. Residue H78 is modified to Phosphohistidine; by HPr. Residue D81 coordinates Mg(2+).

In terms of assembly, homotrimer. The cofactor is Mg(2+).

It localises to the cytoplasm. In terms of biological role, the phosphoenolpyruvate-dependent sugar phosphotransferase system (sugar PTS), a major carbohydrate active transport system, catalyzes the phosphorylation of incoming sugar substrates concomitantly with their translocation across the cell membrane. The enzyme II LacEF PTS system is involved in lactose transport. This chain is PTS system lactose-specific EIIA component, found in Streptococcus mutans serotype c (strain ATCC 700610 / UA159).